Here is a 503-residue protein sequence, read N- to C-terminus: ATP synthase subunit alpha (503 aa).

169-176 (GDRQTGKT) provides a ligand contact to ATP.

This sequence belongs to the ATPase alpha/beta chains family. As to quaternary structure, F-type ATPases have 2 components, CF(1) - the catalytic core - and CF(0) - the membrane proton channel. CF(1) has five subunits: alpha(3), beta(3), gamma(1), delta(1), epsilon(1). CF(0) has three main subunits: a(1), b(2) and c(9-12). The alpha and beta chains form an alternating ring which encloses part of the gamma chain. CF(1) is attached to CF(0) by a central stalk formed by the gamma and epsilon chains, while a peripheral stalk is formed by the delta and b chains.

It localises to the cell membrane. It catalyses the reaction ATP + H2O + 4 H(+)(in) = ADP + phosphate + 5 H(+)(out). Functionally, produces ATP from ADP in the presence of a proton gradient across the membrane. The alpha chain is a regulatory subunit. The sequence is that of ATP synthase subunit alpha from Staphylococcus epidermidis (strain ATCC 35984 / DSM 28319 / BCRC 17069 / CCUG 31568 / BM 3577 / RP62A).